Reading from the N-terminus, the 209-residue chain is MGRGKIEIKRIENSTNRQVTFSKRRSGILKKAREISVLCDAEVGVVIFSSAGKLYDYCSPKTSLSRILEKYQTNSGKILWDEKHKSLSAEIDRIKKENDNMQIELRHLKGEDLNSLQPKELIMIEEALDNGIVNVNDKLMDHWERHVRTDKMLEDENKLLAFKLHQQDIALSGSMRDLELGYHPDRDFAAQMPITFRVQPSHPNLQENN.

Residues 1–61 (MGRGKIEIKR…GKLYDYCSPK (61 aa)) enclose the MADS-box domain. The region spanning 84-170 (HKSLSAEIDR…AFKLHQQDIA (87 aa)) is the K-box domain.

As to expression, highly expressed in anthers and carpels. Expressed in pollen, tapetum and stigma.

The protein resides in the nucleus. Probable transcription factor involved in the development of floral organs. B-class protein required for normal development of lodicules (whorl 2). In Oryza sativa subsp. japonica (Rice), this protein is MADS-box transcription factor 2 (MADS2).